Here is a 273-residue protein sequence, read N- to C-terminus: Pre-mRNA-splicing factor CWC23 (273 aa).

Residues 15 to 87 (DLYALLEVSI…SLRATYNRWL (73 aa)) enclose the J domain.

It belongs to the DnaJ family. In terms of assembly, associated with the spliceosome.

It is found in the cytoplasm. The protein resides in the nucleus. In terms of biological role, involved in pre-mRNA splicing. May be involved in endoplasmic reticulum-associated protein degradation (ERAD) and required for growth at low and high temperatures. The sequence is that of Pre-mRNA-splicing factor CWC23 (CWC23) from Eremothecium gossypii (strain ATCC 10895 / CBS 109.51 / FGSC 9923 / NRRL Y-1056) (Yeast).